Here is a 221-residue protein sequence, read N- to C-terminus: Large ribosomal subunit protein uL4 (221 aa).

The disordered stretch occupies residues 56–83 (HATKTRGMVSGGGRKPWKQKGTGRARQG).

This sequence belongs to the universal ribosomal protein uL4 family. Part of the 50S ribosomal subunit.

One of the primary rRNA binding proteins, this protein initially binds near the 5'-end of the 23S rRNA. It is important during the early stages of 50S assembly. It makes multiple contacts with different domains of the 23S rRNA in the assembled 50S subunit and ribosome. Its function is as follows. Forms part of the polypeptide exit tunnel. The protein is Large ribosomal subunit protein uL4 of Bifidobacterium adolescentis (strain ATCC 15703 / DSM 20083 / NCTC 11814 / E194a).